We begin with the raw amino-acid sequence, 365 residues long: Anhydro-N-acetylmuramic acid kinase (365 aa).

Residue 12–19 coordinates ATP; the sequence is GTSMDGMD.

The protein belongs to the anhydro-N-acetylmuramic acid kinase family.

The catalysed reaction is 1,6-anhydro-N-acetyl-beta-muramate + ATP + H2O = N-acetyl-D-muramate 6-phosphate + ADP + H(+). It functions in the pathway amino-sugar metabolism; 1,6-anhydro-N-acetylmuramate degradation. The protein operates within cell wall biogenesis; peptidoglycan recycling. Its function is as follows. Catalyzes the specific phosphorylation of 1,6-anhydro-N-acetylmuramic acid (anhMurNAc) with the simultaneous cleavage of the 1,6-anhydro ring, generating MurNAc-6-P. Is required for the utilization of anhMurNAc either imported from the medium or derived from its own cell wall murein, and thus plays a role in cell wall recycling. This Pseudomonas paraeruginosa (strain DSM 24068 / PA7) (Pseudomonas aeruginosa (strain PA7)) protein is Anhydro-N-acetylmuramic acid kinase.